Here is a 143-residue protein sequence, read N- to C-terminus: NADH-quinone oxidoreductase subunit A (143 aa).

3 helical membrane passes run 8–28, 63–83, and 93–113; these read FGNV…GYLT, FYVV…LFPW, and FALI…VYAW.

This sequence belongs to the complex I subunit 3 family. As to quaternary structure, NDH-1 is composed of 14 different subunits. Subunits NuoA, H, J, K, L, M, N constitute the membrane sector of the complex.

Its subcellular location is the cell inner membrane. The enzyme catalyses a quinone + NADH + 5 H(+)(in) = a quinol + NAD(+) + 4 H(+)(out). Its function is as follows. NDH-1 shuttles electrons from NADH, via FMN and iron-sulfur (Fe-S) centers, to quinones in the respiratory chain. The immediate electron acceptor for the enzyme in this species is believed to be a menaquinone. Couples the redox reaction to proton translocation (for every two electrons transferred, four hydrogen ions are translocated across the cytoplasmic membrane), and thus conserves the redox energy in a proton gradient. In Chlorobium luteolum (strain DSM 273 / BCRC 81028 / 2530) (Pelodictyon luteolum), this protein is NADH-quinone oxidoreductase subunit A.